Consider the following 288-residue polypeptide: Protein FANTASTIC FOUR 3 (288 aa).

Residues His-48–Ala-60 show a composition bias toward basic and acidic residues. Disordered stretches follow at residues His-48–Gln-100, Glu-146–Thr-172, and Asn-222–Val-261. Residues Ser-66–Ser-90 show a composition bias toward low complexity. Positions Asp-165–Ile-217 constitute an FAF domain. Residues Glu-223 to Met-256 show a composition bias toward acidic residues.

The protein belongs to the fantastic four family. Expressed in the shoot apex, stamens, young leaves and young siliques, but not in old leaves. Detected in provascular and vascular tissue, but not in the vegetative meristem. In inflorescences, restricted to the vasculature and absent from young flowers, except from anthers.

In terms of biological role, able to repress WUS when constitutively overexpressed, but have no effect on CLV3. This chain is Protein FANTASTIC FOUR 3 (FAF3), found in Arabidopsis thaliana (Mouse-ear cress).